Here is a 295-residue protein sequence, read N- to C-terminus: Enolase-phosphatase E1 (295 aa).

Residues D20 and E22 each contribute to the Mg(2+) site. Substrate contacts are provided by residues 153 to 154 (SS) and K187. D212 contributes to the Mg(2+) binding site. Residues 260–295 (ETKEENGGATNGKRKIEETNDDVAEEDKAQVYPNKK) are disordered.

The protein belongs to the HAD-like hydrolase superfamily. MasA/MtnC family. In terms of assembly, monomer. Mg(2+) is required as a cofactor.

It localises to the cytoplasm. The protein resides in the nucleus. The catalysed reaction is 5-methylsulfanyl-2,3-dioxopentyl phosphate + H2O = 1,2-dihydroxy-5-(methylsulfanyl)pent-1-en-3-one + phosphate. It functions in the pathway amino-acid biosynthesis; L-methionine biosynthesis via salvage pathway; L-methionine from S-methyl-5-thio-alpha-D-ribose 1-phosphate: step 3/6. Its pathway is amino-acid biosynthesis; L-methionine biosynthesis via salvage pathway; L-methionine from S-methyl-5-thio-alpha-D-ribose 1-phosphate: step 4/6. In terms of biological role, bifunctional enzyme that catalyzes the enolization of 2,3-diketo-5-methylthiopentyl-1-phosphate (DK-MTP-1-P) into the intermediate 2-hydroxy-3-keto-5-methylthiopentenyl-1-phosphate (HK-MTPenyl-1-P), which is then dephosphorylated to form the acireductone 1,2-dihydroxy-3-keto-5-methylthiopentene (DHK-MTPene). In Anopheles gambiae (African malaria mosquito), this protein is Enolase-phosphatase E1.